The sequence spans 98 residues: DNA-binding protein Fis (98 aa).

A DNA-binding region (H-T-H motif) is located at residues 74 to 93 (QTRAATMMGINRGTLRKKLK).

The protein belongs to the transcriptional regulatory Fis family. As to quaternary structure, homodimer.

Activates ribosomal RNA transcription. Plays a direct role in upstream activation of rRNA promoters. The polypeptide is DNA-binding protein Fis (Vibrio atlanticus (strain LGP32) (Vibrio splendidus (strain Mel32))).